Reading from the N-terminus, the 66-residue chain is Toxin Boma6b (66 aa).

Residues 2–64 (RDAYIAQNYN…VPIKVEGKCH (63 aa)) form the LCN-type CS-alpha/beta domain. 4 disulfides stabilise this stretch: Cys-12–Cys-63, Cys-16–Cys-36, Cys-22–Cys-46, and Cys-26–Cys-48.

Belongs to the long (4 C-C) scorpion toxin superfamily. Sodium channel inhibitor family. Alpha subfamily. In terms of tissue distribution, expressed by the venom gland.

Its subcellular location is the secreted. Its function is as follows. Alpha toxins bind voltage-independently at site-3 of sodium channels (Nav) and inhibit the inactivation of the activated channels, thereby blocking neuronal transmission. This is Toxin Boma6b from Buthus occitanus mardochei (Moroccan scorpion).